A 239-amino-acid chain; its full sequence is Ribosomal RNA small subunit methyltransferase G (239 aa).

S-adenosyl-L-methionine is bound by residues glycine 77, phenylalanine 82, 128 to 129, and arginine 146; that span reads AE. A disordered region spans residues 215–239; that stretch reads DKKRQTPKKYPRKPGTPNKTPLLEK.

Belongs to the methyltransferase superfamily. RNA methyltransferase RsmG family.

It is found in the cytoplasm. Its function is as follows. Specifically methylates the N7 position of guanine in position 535 of 16S rRNA. This chain is Ribosomal RNA small subunit methyltransferase G, found in Staphylococcus aureus (strain bovine RF122 / ET3-1).